Consider the following 305-residue polypeptide: Axin interactor, dorsalization-associated protein B (305 aa).

The span at 126–137 (ENLEVEEEEEDG) shows a compositional bias: acidic residues. The tract at residues 126 to 146 (ENLEVEEEEEDGGAGAGSPDL) is disordered. The interval 153-220 (GTLLPRLPSE…RKEDTYVHFN (68 aa)) is axin-binding. The 148-residue stretch at 156 to 303 (LPRLPSEPGM…LYLHLLQTLL (148 aa)) folds into the C2 Aida-type domain.

Belongs to the AIDA family.

Functionally, acts as a ventralizing factor during embryogenesis. Inhibits axin-mediated JNK activation by binding axin and disrupting axin homodimerization. This in turn antagonizes a Wnt/beta-catenin-independent dorsalization pathway activated by axin/JNK-signaling. The polypeptide is Axin interactor, dorsalization-associated protein B (aida-b) (Xenopus laevis (African clawed frog)).